Here is a 712-residue protein sequence, read N- to C-terminus: MTSPVAQCASVPDSGLLCLVMLARYHGLAADPEQLRHEFAEQAFCSETIQLAARRVGLKVRRHRPAPARLPRAPLPAIALDRQGGYFVLARFEPGADQAVLIQRPGQAPARLGQAEFEALWAGELLLCACAASPTQALARFDFSWFIPALVKHRHLIGEVLLISLVLQFIALLTPLFFQVVMDKVLVNNAMETLNVIAVGFLAAILFEALLTGIRTYLFAHTSSKLDVELGARLYAHLLRLPLAYFQARRVGDSVARVRELEHIRAFLTGNAVTVLLDVVFSVVFIAVMFFYSVKLTLVVLAALPCYFLLSLVLTPVLRRRLDVKFNRGAENQAFLVETVSGIDTVKSLAVEPQWQRNWDRQLAGYVAAGLSVANVAMLANTGVTLISRLVALGVLWVGATEVVAQRMTVGELVAFNMLSGHVTQPVIRLAQLWNDFQQTGVSMQRLGDILNCRTEVAGDKAQLPALRGSIELDRVSFRYRPDAADALRNVSLRIAPGEVVGVVGRSGSGKSTLTRLIQRMFVADRGRVLIDGHDIGIVDSASLRRQLGVVLQESTLFNRSVRDNIALTRPGASMHEVVAAARLAGAHEFICQLPEGYDTMLGENGVGLSGGQRQRIGIARALIHRPRVLILDEATSALDYESEHIIQRNMRDICDGRTVIIIAHRLSAVRCADRIVVMEGGEVAECGSHETLLAAGGLYARLQALQAGEAG.

Residues 7 to 128 form the Peptidase C39 domain; sequence QCASVPDSGL…ALWAGELLLC (122 aa). The region spanning 157-439 is the ABC transmembrane type-1 domain; sequence IGEVLLISLV…LAQLWNDFQQ (283 aa). A run of 6 helical transmembrane segments spans residues 160 to 180, 194 to 214, 272 to 292, 298 to 318, 367 to 387, and 390 to 410; these read VLLI…FFQV, LNVI…LTGI, AVTV…MFFY, LVVL…TPVL, VAAG…VTLI, and LVAL…RMTV. Residues 471-706 enclose the ABC transporter domain; sequence IELDRVSFRY…GGLYARLQAL (236 aa). 505–512 contributes to the ATP binding site; the sequence is GRSGSGKS.

This sequence belongs to the ABC transporter superfamily. Cyclolysin exporter (TC 3.A.1.109.2) family.

Its subcellular location is the cell membrane. In terms of biological role, involved in the export of calmodulin-sensitive adenylate cyclase-hemolysin (cyclolysin). The polypeptide is Cyclolysin secretion/processing ATP-binding protein CyaB (cyaB) (Bordetella pertussis (strain Tohama I / ATCC BAA-589 / NCTC 13251)).